The sequence spans 128 residues: Protein BEX1 (128 aa).

The disordered stretch occupies residues 1 to 37 (MESKEKRAVNNLSMENTNQENEEKEEKEQVANKGEPL). A Phosphoserine modification is found at Ser105. A disordered region spans residues 107–128 (SLRAVSTDPPHHDHHDEFCLMP). The span at 115-128 (PPHHDHHDEFCLMP) shows a compositional bias: basic and acidic residues. Positions 117–121 (HHDHH) are his cluster. Cys125 provides a ligand contact to Zn(2+).

The protein belongs to the BEX family. In terms of assembly, interacts with neurotrophin receptor p75NTR/NGFR. Interacts with OMP. In terms of processing, phosphorylated. Phosphorylation of Ser-105 protects it from the proteasome. Post-translationally, ubiquitinated. Degraded by the proteasome.

It is found in the nucleus. Its subcellular location is the cytoplasm. Its function is as follows. Signaling adapter molecule involved in p75NTR/NGFR signaling. Plays a role in cell cycle progression and neuronal differentiation. Inhibits neuronal differentiation in response to nerve growth factor (NGF). May act as a link between the cell cycle and neurotrophic factor signaling, possibly by functioning as an upstream modulator of receptor signaling, coordinating biological responses to external signals with internal cellular states. In absence of reductive stress, acts as a pseudosubstrate for the CRL2(FEM1B) complex: associates with FEM1B via zinc, thereby preventing association between FEM1B and its substrates. This Macaca fascicularis (Crab-eating macaque) protein is Protein BEX1 (BEX1).